We begin with the raw amino-acid sequence, 279 residues long: Protein FAM151B (279 aa).

Belongs to the menorin family.

Its function is as follows. Essential for survival of retinal photoreceptor cells. This is Protein FAM151B (Fam151b) from Mus musculus (Mouse).